The primary structure comprises 706 residues: Transmembrane and coiled-coil domains protein 2 (706 aa).

Disordered regions lie at residues 1–221 (MKRC…TTDT) and 251–280 (VALS…PDPQ). Serine 6 carries the phosphoserine modification. Over residues 83–94 (GLKHLFHSRRRS) the composition is skewed to basic residues. The segment covering 102–112 (SQEAQQQQQQQ) has biased composition (low complexity). The segment covering 120-131 (PDEKERSPEMHR) has biased composition (basic and acidic residues). Arginine 163 bears the Omega-N-methylarginine mark. Residues 330–365 (KQVFEKKNQKSAQTIAQLHKKLEHYRRRLKEIEQNG) are a coiled coil. Serine 435 is modified (phosphoserine). The segment at 440-459 (AHLKDPMEDGPPEEAARALS) is disordered. 2 positions are modified to phosphoserine: serine 461 and serine 467. The tract at residues 464–510 (LVSSPKYGSDDECSSASASSAGAGSNSGAGPGGALGSPRSNTLYGAP) is disordered. The segment covering 477-487 (SSASASSAGAG) has biased composition (low complexity). Positions 488–498 (SNSGAGPGGAL) are enriched in gly residues. Serine 500 carries the phosphoserine modification. Positions 511–630 (GNLDTLLEEL…QQQQVVQLEG (120 aa)) form a coiled coil. Helical transmembrane passes span 646 to 666 (VILA…NFIT) and 679 to 699 (ALLL…TYLL).

It belongs to the TEX28 family. As to quaternary structure, may form homodimers and heterodimers with TMCC2 or TMCC3 via the coiled-coil domains. Interacts with ribosomal proteins RPL4 and RPS6. Interacts with APOE and proteolytic processed C-terminal fragment C99 of the amyloid precursor protein (APP C99).

Its subcellular location is the endoplasmic reticulum membrane. May be involved in the regulation of the proteolytic processing of the amyloid precursor protein (APP) possibly also implicating APOE. This chain is Transmembrane and coiled-coil domains protein 2, found in Mus musculus (Mouse).